A 539-amino-acid chain; its full sequence is Phosphoenolpyruvate carboxykinase (ATP) (539 aa).

3 residues coordinate substrate: arginine 64, tyrosine 206, and lysine 212. Residues lysine 212, histidine 231, and 247–255 (GLSGTGKTT) each bind ATP. Lysine 212 and histidine 231 together coordinate Mn(2+). A Mn(2+)-binding site is contributed by aspartate 268. Residues glutamate 296, arginine 332, 448 to 449 (RI), and threonine 454 contribute to the ATP site. Residue arginine 332 participates in substrate binding.

The protein belongs to the phosphoenolpyruvate carboxykinase (ATP) family. As to quaternary structure, monomer. Mn(2+) serves as cofactor.

The protein localises to the cytoplasm. It catalyses the reaction oxaloacetate + ATP = phosphoenolpyruvate + ADP + CO2. Its pathway is carbohydrate biosynthesis; gluconeogenesis. Involved in the gluconeogenesis. Catalyzes the conversion of oxaloacetate (OAA) to phosphoenolpyruvate (PEP) through direct phosphoryl transfer between the nucleoside triphosphate and OAA. The polypeptide is Phosphoenolpyruvate carboxykinase (ATP) (Yersinia pestis bv. Antiqua (strain Antiqua)).